The sequence spans 233 residues: tRNA (guanine-N(7)-)-methyltransferase (233 aa).

S-adenosyl-L-methionine-binding residues include Glu64, Glu89, Asp116, and Asp138. The active site involves Asp138. Substrate-binding positions include Lys142, Asp174, and 212–215 (TRYE).

It belongs to the class I-like SAM-binding methyltransferase superfamily. TrmB family.

The enzyme catalyses guanosine(46) in tRNA + S-adenosyl-L-methionine = N(7)-methylguanosine(46) in tRNA + S-adenosyl-L-homocysteine. The protein operates within tRNA modification; N(7)-methylguanine-tRNA biosynthesis. In terms of biological role, catalyzes the formation of N(7)-methylguanine at position 46 (m7G46) in tRNA. The polypeptide is tRNA (guanine-N(7)-)-methyltransferase (Rhizobium johnstonii (strain DSM 114642 / LMG 32736 / 3841) (Rhizobium leguminosarum bv. viciae)).